The primary structure comprises 484 residues: Glutamate--tRNA ligase (484 aa).

Residues 11 to 21 (PSPTGYLHIGN) carry the 'HIGH' region motif. Positions 252 to 256 (KLSKR) match the 'KMSKS' region motif. Lys-255 contacts ATP.

It belongs to the class-I aminoacyl-tRNA synthetase family. Glutamate--tRNA ligase type 1 subfamily. As to quaternary structure, monomer.

It localises to the cytoplasm. The catalysed reaction is tRNA(Glu) + L-glutamate + ATP = L-glutamyl-tRNA(Glu) + AMP + diphosphate. Functionally, catalyzes the attachment of glutamate to tRNA(Glu) in a two-step reaction: glutamate is first activated by ATP to form Glu-AMP and then transferred to the acceptor end of tRNA(Glu). The chain is Glutamate--tRNA ligase from Staphylococcus aureus (strain bovine RF122 / ET3-1).